The primary structure comprises 1886 residues: Polyprotein P3 (1886 aa).

Disordered regions lie at residues 1–24, 420–466, and 478–529; these read MATR…SGVP, RCDS…MQDD, and RMKK…NQPE. A compositionally biased stretch (polar residues) spans 9-20; it reads VTQTDGSRTATE. A compositionally biased stretch (low complexity) spans 488-498; it reads QQALSSQAQEE. The segment at 879 to 896 adopts a CCHC-type zinc-finger fold; that stretch reads CKCYICGQEGHYANQCRN. The region spanning 1215–1292 is the Peptidase A2 domain; that stretch reads INAIVDTGAT…GLSPGIQMII (78 aa). Catalysis depends on Asp1220, which acts as the For protease activity. The Reverse transcriptase domain maps to 1425–1615; that stretch reads LLQMKVIRPS…PEIDFLGASL (191 aa). The RNase H type-1 domain occupies 1706–1841; sequence KDSFIIIETD…ADALSRMINF (136 aa). Residues Asp1715, Glu1758, Asp1784, and Asp1833 each coordinate Mg(2+).

In terms of processing, polyprotein P3 is presumably proteolytically cleaved into several chains by viral protease.

The catalysed reaction is Endonucleolytic cleavage to 5'-phosphomonoester.. The enzyme catalyses DNA(n) + a 2'-deoxyribonucleoside 5'-triphosphate = DNA(n+1) + diphosphate. Functionally, capsid protein self assembles to form a bacilliform capsid about 90-900 nm in length. The capsid encapsulates the genomic dsDNA. Following virus entry into host cell, provides nuclear import of the viral genome. Virus particles do not enter the nucleus, but are targeted to the nuclear membrane through the interaction with host importins. The sequence is that of Polyprotein P3 from Commelina yellow mottle virus (CoYMV).